The following is a 383-amino-acid chain: Protein COS5 (383 aa).

Topologically, residues 1–42 are cytoplasmic; sequence MKENELKNEKSVDVLSFKQLESQKIVLPQDLFRSSFTWFCYE. A helical transmembrane segment spans residues 43 to 63; it reads IYKSLAFPIWMLLWLPLSVWW. Residues 64–72 are Extracellular-facing; that stretch reads KLSNNCIYP. Residues 73–93 traverse the membrane as a helical segment; sequence LIVSLLVLFLGPIFVLVICGL. Residues 94 to 232 are Cytoplasmic-facing; the sequence is SRKRSLSKQL…RSKLTWFLKR (139 aa). A helical membrane pass occupies residues 233-253; it reads IFTIYSLPLWLAFLNCICVSQ. A topological domain (extracellular) is located at residue H254. The chain crosses the membrane as a helical span at residues 255–275; the sequence is FCLAFRILCPGLFFLMMVWLF. Residues 276 to 383 lie on the Cytoplasmic side of the membrane; the sequence is QNMRTTALLV…SRNEESLMKK (108 aa).

The protein belongs to the DUP/COS family.

The protein resides in the membrane. The polypeptide is Protein COS5 (COS5) (Saccharomyces cerevisiae (strain ATCC 204508 / S288c) (Baker's yeast)).